Consider the following 513-residue polypeptide: Putative ribose/galactose/methyl galactoside import ATP-binding protein 3 (513 aa).

ABC transporter domains follow at residues 15–252 (IELT…VGRQ) and 263–508 (TSAN…TQRE). 47–54 (GENGAGKS) provides a ligand contact to ATP.

Belongs to the ABC transporter superfamily. Carbohydrate importer 2 (CUT2) (TC 3.A.1.2) family.

Its subcellular location is the cell inner membrane. It catalyses the reaction D-ribose(out) + ATP + H2O = D-ribose(in) + ADP + phosphate + H(+). The enzyme catalyses D-galactose(out) + ATP + H2O = D-galactose(in) + ADP + phosphate + H(+). Part of an ABC transporter complex involved in carbohydrate import. Could be involved in ribose, galactose and/or methyl galactoside import. Responsible for energy coupling to the transport system. This is Putative ribose/galactose/methyl galactoside import ATP-binding protein 3 from Burkholderia ambifaria (strain ATCC BAA-244 / DSM 16087 / CCUG 44356 / LMG 19182 / AMMD) (Burkholderia cepacia (strain AMMD)).